A 406-amino-acid chain; its full sequence is Cysteine desulfurase (406 aa).

An N6-(pyridoxal phosphate)lysine modification is found at Lys-226. The active-site Cysteine persulfide intermediate is the Cys-364.

Belongs to the class-V pyridoxal-phosphate-dependent aminotransferase family. Csd subfamily. As to quaternary structure, homodimer. Interacts with SufE and the SufBCD complex composed of SufB, SufC and SufD. The interaction with SufE is required to mediate the direct transfer of the sulfur atom from the S-sulfanylcysteine. Pyridoxal 5'-phosphate serves as cofactor.

It localises to the cytoplasm. The catalysed reaction is (sulfur carrier)-H + L-cysteine = (sulfur carrier)-SH + L-alanine. It catalyses the reaction L-selenocysteine + AH2 = hydrogenselenide + L-alanine + A + H(+). It participates in cofactor biosynthesis; iron-sulfur cluster biosynthesis. Functionally, cysteine desulfurases mobilize the sulfur from L-cysteine to yield L-alanine, an essential step in sulfur metabolism for biosynthesis of a variety of sulfur-containing biomolecules. Component of the suf operon, which is activated and required under specific conditions such as oxidative stress and iron limitation. Acts as a potent selenocysteine lyase in vitro, that mobilizes selenium from L-selenocysteine. Selenocysteine lyase activity is however unsure in vivo. The protein is Cysteine desulfurase of Escherichia coli O139:H28 (strain E24377A / ETEC).